Reading from the N-terminus, the 251-residue chain is Triosephosphate isomerase (251 aa).

10–12 (NWK) is a binding site for substrate. The active-site Electrophile is the His98. Catalysis depends on Glu169, which acts as the Proton acceptor. Substrate contacts are provided by residues Gly175, Ser213, and 234–235 (GG).

The protein belongs to the triosephosphate isomerase family. Homodimer.

Its subcellular location is the cytoplasm. It carries out the reaction D-glyceraldehyde 3-phosphate = dihydroxyacetone phosphate. Its pathway is carbohydrate biosynthesis; gluconeogenesis. It participates in carbohydrate degradation; glycolysis; D-glyceraldehyde 3-phosphate from glycerone phosphate: step 1/1. Functionally, involved in the gluconeogenesis. Catalyzes stereospecifically the conversion of dihydroxyacetone phosphate (DHAP) to D-glyceraldehyde-3-phosphate (G3P). This chain is Triosephosphate isomerase, found in Paracidovorax citrulli (strain AAC00-1) (Acidovorax citrulli).